The chain runs to 153 residues: 3-hydroxyacyl-[acyl-carrier-protein] dehydratase FabZ (153 aa).

Residue histidine 56 is part of the active site.

The protein belongs to the thioester dehydratase family. FabZ subfamily.

It is found in the cytoplasm. The enzyme catalyses a (3R)-hydroxyacyl-[ACP] = a (2E)-enoyl-[ACP] + H2O. Its function is as follows. Involved in unsaturated fatty acids biosynthesis. Catalyzes the dehydration of short chain beta-hydroxyacyl-ACPs and long chain saturated and unsaturated beta-hydroxyacyl-ACPs. This Halorhodospira halophila (strain DSM 244 / SL1) (Ectothiorhodospira halophila (strain DSM 244 / SL1)) protein is 3-hydroxyacyl-[acyl-carrier-protein] dehydratase FabZ.